A 281-amino-acid chain; its full sequence is Ribosomal RNA small subunit methyltransferase A (281 aa).

Positions 36, 38, 63, 84, 109, and 127 each coordinate S-adenosyl-L-methionine.

This sequence belongs to the class I-like SAM-binding methyltransferase superfamily. rRNA adenine N(6)-methyltransferase family. RsmA subfamily.

It localises to the cytoplasm. The enzyme catalyses adenosine(1518)/adenosine(1519) in 16S rRNA + 4 S-adenosyl-L-methionine = N(6)-dimethyladenosine(1518)/N(6)-dimethyladenosine(1519) in 16S rRNA + 4 S-adenosyl-L-homocysteine + 4 H(+). In terms of biological role, specifically dimethylates two adjacent adenosines (A1518 and A1519) in the loop of a conserved hairpin near the 3'-end of 16S rRNA in the 30S particle. May play a critical role in biogenesis of 30S subunits. The protein is Ribosomal RNA small subunit methyltransferase A of Borreliella afzelii (strain PKo) (Borrelia afzelii).